Here is a 1056-residue protein sequence, read N- to C-terminus: Carbamoyl phosphate synthase large chain (1056 aa).

The tract at residues 1-398 is carboxyphosphate synthetic domain; sequence MPRDPSIKKV…AFLKALRSLD (398 aa). Arg127, Arg167, Gly173, Gly174, Glu206, Val208, Glu213, Gly239, Val240, His241, Gln282, and Glu295 together coordinate ATP. One can recognise an ATP-grasp 1 domain in the interval 131–324; it reads RDLMNRIGEP…IARVASKIAI (194 aa). Gln282, Glu295, and Asn297 together coordinate Mg(2+). 3 residues coordinate Mn(2+): Gln282, Glu295, and Asn297. The tract at residues 399–532 is oligomerization domain; sequence TDVEHHTVLS…STYGDKVCEV (134 aa). The interval 533–921 is carbamoyl phosphate synthetic domain; that stretch reads THSDRKKVMI…YKASIAAHNR (389 aa). Residues 663–854 form the ATP-grasp 2 domain; that stretch reads SVLLDSLSIP…LAKIAARVMM (192 aa). Residues Arg699, Arg738, Leu740, Glu745, Gly770, Val771, His772, Ser773, Gln813, and Glu825 each contribute to the ATP site. Positions 813, 825, and 827 each coordinate Mg(2+). 3 residues coordinate Mn(2+): Gln813, Glu825, and Asn827. Residues 920-1056 form the MGS-like domain; that stretch reads NRLPKSGNVF…IEPLQHYIGR (137 aa). Residues 922 to 1056 are allosteric domain; sequence LPKSGNVFIS…IEPLQHYIGR (135 aa).

It belongs to the CarB family. As to quaternary structure, composed of two chains; the small (or glutamine) chain promotes the hydrolysis of glutamine to ammonia, which is used by the large (or ammonia) chain to synthesize carbamoyl phosphate. Tetramer of heterodimers (alpha,beta)4. Mg(2+) serves as cofactor. Mn(2+) is required as a cofactor.

It carries out the reaction hydrogencarbonate + L-glutamine + 2 ATP + H2O = carbamoyl phosphate + L-glutamate + 2 ADP + phosphate + 2 H(+). The catalysed reaction is hydrogencarbonate + NH4(+) + 2 ATP = carbamoyl phosphate + 2 ADP + phosphate + 2 H(+). Its pathway is amino-acid biosynthesis; L-arginine biosynthesis; carbamoyl phosphate from bicarbonate: step 1/1. It participates in pyrimidine metabolism; UMP biosynthesis via de novo pathway; (S)-dihydroorotate from bicarbonate: step 1/3. Functionally, large subunit of the glutamine-dependent carbamoyl phosphate synthetase (CPSase). CPSase catalyzes the formation of carbamoyl phosphate from the ammonia moiety of glutamine, carbonate, and phosphate donated by ATP, constituting the first step of 2 biosynthetic pathways, one leading to arginine and/or urea and the other to pyrimidine nucleotides. The large subunit (synthetase) binds the substrates ammonia (free or transferred from glutamine from the small subunit), hydrogencarbonate and ATP and carries out an ATP-coupled ligase reaction, activating hydrogencarbonate by forming carboxy phosphate which reacts with ammonia to form carbamoyl phosphate. In Methanospirillum hungatei JF-1 (strain ATCC 27890 / DSM 864 / NBRC 100397 / JF-1), this protein is Carbamoyl phosphate synthase large chain.